Reading from the N-terminus, the 227-residue chain is MTQGNQKTEGNPPEQVTVTDKRRIDPETGEVRHVPPGDTPGGTAPQAATAESGGAATDKVAELTADLQRVQADFANYRKRALRDQQAAADRAKAAVVNQLLGVLDDLERARKHGDLESGPLKSVADKLESALTGLGLTAFGEEGEEFDPVLHEAVQHEGDGSKPVIGTVMRQGYKLGDQVLRHALVGVVDTVTEEGDGEAAATDEPTAAAAETRPPESDDNAGASGD.

The segment covering 1–18 (MTQGNQKTEGNPPEQVTV) has biased composition (polar residues). 2 disordered regions span residues 1-57 (MTQG…GAAT) and 193-227 (TEEGDGEAAATDEPTAAAAETRPPESDDNAGASGD). A compositionally biased stretch (basic and acidic residues) spans 19-35 (TDKRRIDPETGEVRHVP). 2 stretches are compositionally biased toward low complexity: residues 41–50 (GGTAPQAATA) and 199–213 (EAAATDEPTAAAAET).

Belongs to the GrpE family. In terms of assembly, homodimer.

Its subcellular location is the cytoplasm. Its function is as follows. Participates actively in the response to hyperosmotic and heat shock by preventing the aggregation of stress-denatured proteins, in association with DnaK and GrpE. It is the nucleotide exchange factor for DnaK and may function as a thermosensor. Unfolded proteins bind initially to DnaJ; upon interaction with the DnaJ-bound protein, DnaK hydrolyzes its bound ATP, resulting in the formation of a stable complex. GrpE releases ADP from DnaK; ATP binding to DnaK triggers the release of the substrate protein, thus completing the reaction cycle. Several rounds of ATP-dependent interactions between DnaJ, DnaK and GrpE are required for fully efficient folding. The sequence is that of Protein GrpE from Mycolicibacterium paratuberculosis (strain ATCC BAA-968 / K-10) (Mycobacterium paratuberculosis).